We begin with the raw amino-acid sequence, 485 residues long: Glycogen synthase (485 aa).

K21 provides a ligand contact to ADP-alpha-D-glucose.

The protein belongs to the glycosyltransferase 1 family. Bacterial/plant glycogen synthase subfamily.

The catalysed reaction is [(1-&gt;4)-alpha-D-glucosyl](n) + ADP-alpha-D-glucose = [(1-&gt;4)-alpha-D-glucosyl](n+1) + ADP + H(+). It functions in the pathway glycan biosynthesis; glycogen biosynthesis. In terms of biological role, synthesizes alpha-1,4-glucan chains using ADP-glucose. The polypeptide is Glycogen synthase (Pseudomonas syringae pv. syringae (strain B728a)).